The sequence spans 224 residues: Charged multivesicular body protein 4c (224 aa).

Disordered regions lie at residues 1–21 and 182–224; these read MSVF…PTPQ and SGPE…AWAM. Residues 7-17 are compositionally biased toward gly residues; that stretch reads LFGGGGKGGKG. Positions 21 to 221 form a coiled coil; that stretch reads QEAIQKLRET…DEDDMEELKA (201 aa).

The protein belongs to the SNF7 family. In terms of assembly, probable core component of the endosomal sorting required for transport complex III (ESCRT-III). ESCRT-III components are thought to multimerize to form a flat lattice on the perimeter membrane of the endosome.

It localises to the cytoplasm. The protein resides in the cytosol. Its subcellular location is the late endosome membrane. In terms of biological role, probable core component of the endosomal sorting required for transport complex III (ESCRT-III) which is involved in multivesicular bodies (MVBs) formation and sorting of endosomal cargo proteins into MVBs. MVBs contain intraluminal vesicles (ILVs) that are generated by invagination and scission from the limiting membrane of the endosome and mostly are delivered to lysosomes enabling degradation of membrane proteins, such as stimulated growth factor receptors, lysosomal enzymes and lipids. Key component of the cytokinesis checkpoint, a process required to delay abscission to prevent both premature resolution of intercellular chromosome bridges and accumulation of DNA damage. In Danio rerio (Zebrafish), this protein is Charged multivesicular body protein 4c (chmp4c).